We begin with the raw amino-acid sequence, 188 residues long: Putative manganese efflux pump MntP (188 aa).

The next 6 helical transmembrane spans lie at Leu-2 to Val-22, Ile-40 to Leu-60, Ile-66 to Ile-86, Leu-107 to Ile-127, Leu-133 to Phe-153, and Leu-167 to Phe-187.

Belongs to the MntP (TC 9.B.29) family.

It localises to the cell inner membrane. In terms of biological role, probably functions as a manganese efflux pump. In Parabacteroides distasonis (strain ATCC 8503 / DSM 20701 / CIP 104284 / JCM 5825 / NCTC 11152), this protein is Putative manganese efflux pump MntP.